Consider the following 298-residue polypeptide: Iron/alpha-ketoglutarate-dependent dioxygenase ausO (298 aa).

3 residues coordinate Fe cation: histidine 130, aspartate 132, and histidine 211.

Belongs to the PhyH family. As to quaternary structure, homodimer. It depends on Fe cation as a cofactor.

The protein operates within secondary metabolite biosynthesis; terpenoid biosynthesis. In terms of biological role, iron/alpha-ketoglutarate-dependent dioxygenase; part of the gene cluster that mediates the biosynthesis of calidodehydroaustin, a fungal meroterpenoid. The first step of the pathway is the synthesis of 3,5-dimethylorsellinic acid by the polyketide synthase ausA. 3,5-dimethylorsellinic acid is then prenylated by the polyprenyl transferase ausN. Further epoxidation by the FAD-dependent monooxygenase ausM and cyclization by the probable terpene cyclase ausL lead to the formation of protoaustinoid A. Protoaustinoid A is then oxidized to spiro-lactone preaustinoid A3 by the combined action of the FAD-binding monooxygenases ausB and ausC, and the dioxygenase ausE. Acid-catalyzed keto-rearrangement and ring contraction of the tetraketide portion of preaustinoid A3 by ausJ lead to the formation of preaustinoid A4. The aldo-keto reductase ausK, with the help of ausH, is involved in the next step by transforming preaustinoid A4 into isoaustinone which is in turn hydroxylated by the P450 monooxygenase ausI to form austinolide. The cytochrome P450 monooxygenase ausG modifies austinolide to austinol. Austinol is further acetylated to austin by the O-acetyltransferase ausP, which spontaneously changes to dehydroaustin. The cytochrome P450 monooxygenase ausR then converts dehydroaustin is into 7-dehydrodehydroaustin. The hydroxylation catalyzed by ausR permits the O-acetyltransferase ausQ to add an additional acetyl group to the molecule, leading to the formation of acetoxydehydroaustin. The short chain dehydrogenase ausT catalyzes the reduction of the double bond present between carbon atoms 1 and 2 to convert 7-dehydrodehydroaustin into 1,2-dihydro-7-hydroxydehydroaustin. AusQ catalyzes not only an acetylation reaction but also the addition of the PKS ausV diketide product to 1,2-dihydro-7-hydroxydehydroaustin, forming precalidodehydroaustin. Finally, the iron/alpha-ketoglutarate-dependent dioxygenase converts precalidodehydroaustin into calidodehydroaustin. This Aspergillus calidoustus protein is Iron/alpha-ketoglutarate-dependent dioxygenase ausO.